Here is an 87-residue protein sequence, read N- to C-terminus: Small polypeptide DEVIL 11 (87 aa).

Residues 1–11 are compositionally biased toward polar residues; that stretch reads MASSSSLTRSG. The interval 1–47 is disordered; the sequence is MASSSSLTRSGSVHLDEKWKLSKKDGGASRITRSSSTSSSSFNGKKQ. The span at 14–27 shows a compositional bias: basic and acidic residues; sequence HLDEKWKLSKKDGG. The segment covering 29–41 has biased composition (low complexity); it reads SRITRSSSTSSSS. Residues 51–82 are required for DVL/RTFL small polypeptide activity; that stretch reads AFTRKCARLVKEQRARFYIMRRCVIMLICWRD. Residues 64 to 80 traverse the membrane as a helical segment; sequence RARFYIMRRCVIMLICW. An N-linked (GlcNAc...) asparagine glycan is attached at N83.

Belongs to the DVL/RTFL small polypeptides family.

The protein resides in the cell membrane. Functionally, small polypeptide acting as a regulatory molecule which coordinates cellular responses required for differentiation, growth and development, probably by restricting polar cell proliferation in lateral organs and coordinating socket cell recruitment and differentiation at trichome sites. The protein is Small polypeptide DEVIL 11 of Arabidopsis thaliana (Mouse-ear cress).